The following is a 238-amino-acid chain: 1-(5-phosphoribosyl)-5-[(5-phosphoribosylamino)methylideneamino] imidazole-4-carboxamide isomerase (238 aa).

Residue aspartate 8 is the Proton acceptor of the active site. The Proton donor role is filled by aspartate 127.

This sequence belongs to the HisA/HisF family.

The protein resides in the cytoplasm. It carries out the reaction 1-(5-phospho-beta-D-ribosyl)-5-[(5-phospho-beta-D-ribosylamino)methylideneamino]imidazole-4-carboxamide = 5-[(5-phospho-1-deoxy-D-ribulos-1-ylimino)methylamino]-1-(5-phospho-beta-D-ribosyl)imidazole-4-carboxamide. It functions in the pathway amino-acid biosynthesis; L-histidine biosynthesis; L-histidine from 5-phospho-alpha-D-ribose 1-diphosphate: step 4/9. In Nitratiruptor sp. (strain SB155-2), this protein is 1-(5-phosphoribosyl)-5-[(5-phosphoribosylamino)methylideneamino] imidazole-4-carboxamide isomerase.